Reading from the N-terminus, the 806-residue chain is Lysine-specific demethylase JMJ15 (806 aa).

Residues 1 to 43 form a disordered region; that stretch reads MEPFSAAQNKEDKDTSVEPPRRRCHRKNKGTNVEPPSSPYHPK. Positions 9–21 are enriched in basic and acidic residues; it reads NKEDKDTSVEPPR. A JmjN domain is found at 61–102; it reads APVFHPTSEEFEDTLAYIEKIRPLAESFGICRIVPPSNWSPP. Residues 128–176 form a disordered region; the sequence is NRGPVKKKTPKGRKRKRGKYSRTVAPKKRNGSVSKSVSTPKATEEENFG. Residues 131 to 157 are compositionally biased toward basic residues; sequence PVKKKTPKGRKRKRGKYSRTVAPKKRN. A Nuclear localization signal motif is present at residues 132–139; the sequence is VKKKTPKG. Residues 158–168 are compositionally biased toward polar residues; the sequence is GSVSKSVSTPK. Residues 261–427 enclose the JmjC domain; that stretch reads KYISSGWNLN…HGQNAVEIYS (167 aa). Positions 307, 309, and 395 each coordinate Fe cation. Cys514, Cys517, Cys528, Cys531, Cys539, His542, Cys545, and Cys547 together coordinate Zn(2+). The segment at 514–566 adopts a C5HC2 zinc-finger fold; that stretch reads CISCFSDLHLSATGCKNCSSLEEYGCTKHDICSCEGKDRFIFLRYTIDELSSL. Residues 629 to 687 enclose the FYR N-terminal domain; it reads IMDLAAYHVEPINLGFLVVGKLWCNKHAIFPKGFKSRVKFYNVQDPMRISYYVSEIVDA. In terms of domain architecture, FYR C-terminal spans 689-775; the sequence is LLGPLFKVTL…HGQVEYWNHK (87 aa).

The protein belongs to the JARID1 histone demethylase family. The cofactor is Fe(2+). As to expression, expressed in roots, cotyledons, shoot apex, rosette and cauline leaves, stems, inflorescences and siliques. Expressed at low levels during vegetative growth but to higher levels in young floral organs.

The protein resides in the nucleus. It catalyses the reaction N(6),N(6),N(6)-trimethyl-L-lysyl(4)-[histone H3] + 2-oxoglutarate + O2 = N(6),N(6)-dimethyl-L-lysyl(4)-[histone H3] + formaldehyde + succinate + CO2. Its function is as follows. Histone demethylase that demethylates 'Lys-4' (H3K4me) of histone H3 with a specific activity for H3K4me3. No activity on H3K4me2, H3K4me1, H3K9me3/2, H3K27me3/2 and H3K36me3/2. Involved in the control of flowering time by demethylating H3K4me3 at the FLC locus and repressing its expression. The repression of FLC level and reduction in H3K4me3 at the FLC locus results in induction of the flowering activator FT, which is a downstream target of FLC. Promotes salt tolerance by down-regulating the expression of several transcriptions factors involved in stress responses via H3K4me3 and H3K4me2 demethylation. This chain is Lysine-specific demethylase JMJ15, found in Arabidopsis thaliana (Mouse-ear cress).